A 505-amino-acid chain; its full sequence is Annexin A11 (505 aa).

Pro residues-rich tracts occupy residues Met1–Ala17 and Pro99–Leu160. Disordered regions lie at residues Met1–Gly38 and Pro84–Gly199. Low complexity predominate over residues Pro161–Gly177. Annexin repeat units lie at residues Phe200–Lys271, Thr272–Gln343, Ser355–Lys427, and Asn431–Gly502. 2 positions are modified to N6-acetyllysine: Lys248 and Lys255. N6-acetyllysine is present on Lys479.

Belongs to the annexin family. Interacts with S100A6. Interacts with PDCD6 in a calcium-dependent manner. Interacts with KIF23 during cytokinesis.

The protein localises to the cytoplasm. Its subcellular location is the melanosome. It localises to the nucleus envelope. It is found in the nucleus. The protein resides in the nucleoplasm. The protein localises to the cytoskeleton. Its subcellular location is the spindle. Functionally, binds specifically to calcyclin in a calcium-dependent manner. Required for midbody formation and completion of the terminal phase of cytokinesis. This Homo sapiens (Human) protein is Annexin A11 (ANXA11).